The sequence spans 137 residues: Small ribosomal subunit protein uS9 (137 aa).

The interval 114-137 is disordered; that stretch reads DSRMKERKKPGLRGARRGVQFSKR. Residues 118-137 show a composition bias toward basic residues; the sequence is KERKKPGLRGARRGVQFSKR.

The protein belongs to the universal ribosomal protein uS9 family.

The protein is Small ribosomal subunit protein uS9 of Rhodopirellula baltica (strain DSM 10527 / NCIMB 13988 / SH1).